The sequence spans 214 residues: Large ribosomal subunit protein uL16 (214 aa).

Arginine 32 carries the citrulline modification. A Glycyl lysine isopeptide (Lys-Gly) (interchain with G-Cter in SUMO2) cross-link involves residue lysine 175. A Glycyl lysine isopeptide (Lys-Gly) (interchain with G-Cter in ubiquitin) cross-link involves residue lysine 188.

The protein belongs to the universal ribosomal protein uL16 family. In terms of assembly, component of the large ribosomal subunit. Mature ribosomes consist of a small (40S) and a large (60S) subunit. The 40S subunit contains about 33 different proteins and 1 molecule of RNA (18S). The 60S subunit contains about 49 different proteins and 3 molecules of RNA (28S, 5.8S and 5S). In terms of processing, citrullinated by PADI4. Post-translationally, ufmylated by UFL1.

It localises to the cytoplasm. Its function is as follows. Component of the large ribosomal subunit. Plays a role in the formation of actively translating ribosomes. May play a role in the embryonic brain development. This Rattus norvegicus (Rat) protein is Large ribosomal subunit protein uL16.